We begin with the raw amino-acid sequence, 350 residues long: Uroporphyrinogen decarboxylase (350 aa).

Residues 28 to 32 (RQAGR), D78, Y154, T209, and H325 each bind substrate.

It belongs to the uroporphyrinogen decarboxylase family. Homodimer.

Its subcellular location is the cytoplasm. The enzyme catalyses uroporphyrinogen III + 4 H(+) = coproporphyrinogen III + 4 CO2. The protein operates within porphyrin-containing compound metabolism; protoporphyrin-IX biosynthesis; coproporphyrinogen-III from 5-aminolevulinate: step 4/4. Functionally, catalyzes the decarboxylation of four acetate groups of uroporphyrinogen-III to yield coproporphyrinogen-III. The chain is Uroporphyrinogen decarboxylase from Nitrobacter hamburgensis (strain DSM 10229 / NCIMB 13809 / X14).